Consider the following 561-residue polypeptide: Methionine--tRNA ligase (561 aa).

The 'HIGH' region signature appears at 11–21; sequence PYVNTVPHLGN. 4 residues coordinate Zn(2+): Cys143, Cys146, Cys156, and Cys159. Lys334 provides a ligand contact to ATP.

Belongs to the class-I aminoacyl-tRNA synthetase family. MetG type 1 subfamily. Zn(2+) serves as cofactor.

The protein resides in the cytoplasm. The enzyme catalyses tRNA(Met) + L-methionine + ATP = L-methionyl-tRNA(Met) + AMP + diphosphate. Is required not only for elongation of protein synthesis but also for the initiation of all mRNA translation through initiator tRNA(fMet) aminoacylation. The protein is Methionine--tRNA ligase of Ignicoccus hospitalis (strain KIN4/I / DSM 18386 / JCM 14125).